Reading from the N-terminus, the 338-residue chain is Phosphatidylinositol:ceramide inositolphosphotransferase (338 aa).

Over 1–36 (MTSHVTAHDVGGNEDIGTDHVPWYKQPLPLCTQVMR) the chain is Cytoplasmic. A helical membrane pass occupies residues 37 to 57 (FILLLLLTVMFLGVAILVANA). The Extracellular segment spans residues 58-87 (RMPDPEKVRPLPDLLLESIPKVALLENGTN). The helical transmembrane segment at 88–108 (VIIFLLNATTVVVGFKVFLLE) threads the bilayer. Over 109-116 (RHMNGLPR) the chain is Cytoplasmic. The helical transmembrane segment at 117 to 137 (VTFLVGVPKIGSFLNRMAFGV) threads the bilayer. Topologically, residues 138–152 (LDSGRRPFPLKNVFP) are extracellular. A helical membrane pass occupies residues 153-173 (IMAIRFLTSYAVVMVFRAFVI). The Cytoplasmic portion of the chain corresponds to 174-189 (MGTSYPATDNHCQNPQ). A helical transmembrane segment spans residues 190-210 (VIEHPVLNVILTLVTLGSGAI). Over 211 to 222 (HCGDLMFSGHTM) the chain is Extracellular. His-220 is an active-site residue. A helical membrane pass occupies residues 223–243 (ILSLAFILAWDYSPFLHPWAV). At 244 to 338 (RVWVSVLLPI…TDASAALPEH (95 aa)) the chain is on the cytoplasmic side. Residues His-264 and Asp-268 contribute to the active site.

It belongs to the sphingomyelin synthase family.

The protein localises to the membrane. Bidirectional lipid inositolphosphotransferase capable of converting phosphatidylinositol (PI) and ceramide to inositol-phosphorylceramide (IPC) and diacylglycerol (DAG) and vice versa. Direction is dependent on the relative concentrations of DAG and ceramide as phosphoinositol acceptors. Essential for viability of the pathogenic bloodstream stage of this human protozoan parasite and, consequently, can be considered as potential drug target. This Leishmania major protein is Phosphatidylinositol:ceramide inositolphosphotransferase.